The chain runs to 1138 residues: Pesticidal crystal protein Cry7Ab (1138 aa).

Belongs to the delta endotoxin family.

Its function is as follows. Promotes colloidosmotic lysis by binding to the midgut epithelial cells of Coleoptera. This chain is Pesticidal crystal protein Cry7Ab (cry7Ab), found in Bacillus thuringiensis serovar kumamotoensis.